A 348-amino-acid chain; its full sequence is Ferredoxin--NADP reductase (348 aa).

Positions 25, 44, 52, 57, 97, 132, 298, and 339 each coordinate FAD.

Belongs to the ferredoxin--NADP reductase type 2 family. In terms of assembly, homodimer. The cofactor is FAD.

It carries out the reaction 2 reduced [2Fe-2S]-[ferredoxin] + NADP(+) + H(+) = 2 oxidized [2Fe-2S]-[ferredoxin] + NADPH. This Chlorobium phaeobacteroides (strain BS1) protein is Ferredoxin--NADP reductase.